A 64-amino-acid chain; its full sequence is MPCGCGTSCKCGSGKCCCGSTCNCTTCPSKQSCSCNDGACGSACQCKTSCCCGADCKCSPCPMK.

Residues C3, C5, C9, C11, C16, C18, C22, C24, C27, C33, C40, C44, C50, C52, C56, and C58 each contribute to the Cu(+) site.

It belongs to the metallothionein superfamily. Type 2 family.

The metallothioneins are involved in the cellular sequestration of toxic metal ions and regulation of essential trace elements. This isoform binds exclusively copper. The protein is Copper-specific metallothionein-2 of Callinectes sapidus (Blue crab).